A 2871-amino-acid polypeptide reads, in one-letter code: Fibrillin-1 (2871 aa).

Residues 1 to 24 form the signal peptide; that stretch reads MRRGGLLEVALGFTVLLASYTSHG. A propeptide spanning residues 25 to 44 is cleaved from the precursor; the sequence is ADTNLEAGNVKETRANRAKR. Residues 45-81 form a fibrillin unique N-terminal (FUN) domain region; it reads RGGGGHDALKGPNVCGSRYNAYCCPGWKTLPGGNQCI. An N-terminal domain region spans residues 45-450; sequence RGGGGHDALK…PPRVLPVNVT (406 aa). 11 cysteine pairs are disulfide-bonded: cysteine 59/cysteine 68, cysteine 67/cysteine 80, cysteine 85/cysteine 94, cysteine 89/cysteine 100, cysteine 102/cysteine 111, cysteine 119/cysteine 129, cysteine 123/cysteine 134, cysteine 136/cysteine 145, cysteine 150/cysteine 160, cysteine 154/cysteine 166, and cysteine 168/cysteine 177. 3 EGF-like domains span residues 81 to 112, 115 to 146, and 147 to 178; these read IVPICRHSCGDGFCSRPNMCTCPSGQIAPSCG, SIQHCNIRCMNGGSCSDDHCLCQKGYIGTHCG, and QPVCESGCLNGGRCVAPNRCACTYGFTGPQCE. An interaction with MFAP4 region spans residues 119–329; sequence CNIRCMNGGS…YTSPDGTRCI (211 aa). The region spanning 184-236 is the TB 1 domain; it reads GPCFTVISNQMCQGQLSGIVCTKTLCCATVGRAWGHPCEMCPAQPHPCRRGFI. The hybrid domain 1 stretch occupies residues 195–221; it reads CQGQLSGIVCTKTLCCATVGRAWGHPC. Residues 246-287 enclose the EGF-like 4; calcium-binding domain; the sequence is DVDECQAIPGLCQGGNCINTVGSFECKCPAGHKFNEVSQKCE. Cystine bridges form between cysteine 250–cysteine 262, cysteine 257–cysteine 271, cysteine 273–cysteine 286, cysteine 292–cysteine 304, cysteine 299–cysteine 313, and cysteine 315–cysteine 328. Serine 268 carries an O-linked (Glc) serine glycan. An EGF-like 5; calcium-binding domain is found at 288–329; it reads DIDECSTIPGICDGGECTNTVSSYFCKCPPGFYTSPDGTRCI. Residues 334–389 form the TB 2 domain; it reads GYCYTALANGRCSNQLPQSITKMQCCCDVGRCWSPGVTVAPEMCPIRATEDFNKLC. N-linked (GlcNAc...) asparagine glycosylation is present at asparagine 448. The 41-residue stretch at 449–489 folds into the EGF-like 6 domain; that stretch reads VTDYCQLFRYLCQNGRCIPTPGSYRCECNKGFQLDLRGECI. 15 cysteine pairs are disulfide-bonded: cysteine 453-cysteine 465, cysteine 460-cysteine 474, cysteine 476-cysteine 488, cysteine 494-cysteine 504, cysteine 499-cysteine 513, cysteine 515-cysteine 528, cysteine 534-cysteine 546, cysteine 541-cysteine 555, cysteine 557-cysteine 570, cysteine 576-cysteine 587, cysteine 582-cysteine 596, cysteine 598-cysteine 611, cysteine 617-cysteine 628, cysteine 623-cysteine 637, and cysteine 639-cysteine 652. Serine 471 carries an O-linked (Glc) serine glycan. The region spanning 490–529 is the EGF-like 7; calcium-binding domain; that stretch reads DVDECEKNPCAGGECINTQGSYTCQCRPGYQSTLTRTECR. A glycan (O-linked (Glc) serine) is linked at serine 510. The EGF-like 8; calcium-binding domain occupies 530–571; sequence DIDECLQNGRICNNGRCINTDGSFHCVCNAGFHVTRDGKNCE. One can recognise an EGF-like 9; calcium-binding domain in the interval 572-612; sequence DMDECSIRNMCLNGMCINEDGSFKCICKPGFQLASDGRYCK. The EGF-like 10; calcium-binding domain occupies 613–653; sequence DINECETPGICMNGRCVNTDGSYRCECFPGLAVGLDGRVCV. The TB 3 domain occupies 659-711; sequence STCYGGYKRGQCVKPLFGAVTKSECCCASTEYAFGEPCQPCPSQNSAEYQALC. An EGF-like 11; calcium-binding domain is found at 723–764; it reads DINECALDPDICPNGICENLRGTYKCICNSGYEVDSTGKNCV. 16 cysteine pairs are disulfide-bonded: cysteine 727/cysteine 739, cysteine 734/cysteine 748, cysteine 750/cysteine 763, cysteine 769/cysteine 781, cysteine 776/cysteine 790, cysteine 792/cysteine 805, cysteine 811/cysteine 821, cysteine 816/cysteine 830, cysteine 832/cysteine 845, cysteine 853/cysteine 875, cysteine 862/cysteine 887, cysteine 876/cysteine 890, cysteine 896/cysteine 908, cysteine 914/cysteine 926, cysteine 921/cysteine 935, and cysteine 937/cysteine 950. Residues 765 to 806 enclose the EGF-like 12; calcium-binding domain; that stretch reads DINECVLNSLLCDNGQCRNTPGSFVCTCPKGFIYKPELKTCE. The 40-residue stretch at 807-846 folds into the EGF-like 13; calcium-binding domain; that stretch reads DIDECESSPCINGVCKNSPGSFICECSSESTLDPTKTICI. The region spanning 851-902 is the TB 4 domain; that stretch reads GTCWQTVIDGRCEININGATLKSQCCSSLGAAWGSPCTPCQVDPICGKGYSR. The tract at residues 862–887 is hybrid domain 2; the sequence is CEININGATLKSQCCSSLGAAWGSPC. In terms of domain architecture, EGF-like 14; calcium-binding spans 910–951; the sequence is DIDECEVFPGVCKNGLCVNSKGSFKCQCPSGMTLDATGRICL. Positions 956-1008 constitute a TB 5 domain; it reads ETCFLRYEDEECTLPVAGRHRMDACCCSVGAAWGTEECEECPVRNTPEYEELC. The EGF-like 15; calcium-binding domain maps to 1028 to 1069; that stretch reads DINECKMIPNLCTHGKCRNTIGSFKCRCDSGFALDSEERNCT. 46 cysteine pairs are disulfide-bonded: cysteine 1032–cysteine 1044, cysteine 1039–cysteine 1053, cysteine 1055–cysteine 1068, cysteine 1074–cysteine 1086, cysteine 1081–cysteine 1095, cysteine 1097–cysteine 1111, cysteine 1117–cysteine 1129, cysteine 1124–cysteine 1138, cysteine 1140–cysteine 1153, cysteine 1159–cysteine 1171, cysteine 1166–cysteine 1180, cysteine 1182–cysteine 1195, cysteine 1201–cysteine 1212, cysteine 1208–cysteine 1221, cysteine 1223–cysteine 1236, cysteine 1242–cysteine 1254, cysteine 1249–cysteine 1263, cysteine 1265–cysteine 1278, cysteine 1284–cysteine 1296, cysteine 1291–cysteine 1305, cysteine 1307–cysteine 1320, cysteine 1326–cysteine 1339, cysteine 1333–cysteine 1348, cysteine 1350–cysteine 1361, cysteine 1367–cysteine 1380, cysteine 1374–cysteine 1389, cysteine 1391–cysteine 1402, cysteine 1408–cysteine 1420, cysteine 1415–cysteine 1429, cysteine 1431–cysteine 1444, cysteine 1450–cysteine 1461, cysteine 1456–cysteine 1470, cysteine 1472–cysteine 1485, cysteine 1491–cysteine 1502, cysteine 1497–cysteine 1511, cysteine 1513–cysteine 1526, cysteine 1534–cysteine 1562, cysteine 1549–cysteine 1574, cysteine 1563–cysteine 1577, cysteine 1564–cysteine 1589, cysteine 1610–cysteine 1622, cysteine 1617–cysteine 1631, cysteine 1633–cysteine 1646, cysteine 1652–cysteine 1663, cysteine 1658–cysteine 1672, and cysteine 1674–cysteine 1687. An N-linked (GlcNAc...) asparagine glycan is attached at asparagine 1067. Positions 1070-1112 constitute an EGF-like 16; calcium-binding domain; sequence DIDECRISPDLCGRGQCVNTPGDFECKCDEGYESGFMMMKNCM. An EGF-like 17; calcium-binding domain is found at 1113–1154; it reads DIDECQRDPLLCRGGVCLNTEGSYRCECPPGHQLAPNISACI. Serine 1135 carries O-linked (Glc) serine glycosylation. A glycan (N-linked (GlcNAc...) asparagine) is linked at asparagine 1149. The EGF-like 18; calcium-binding domain occupies 1155–1196; the sequence is DINECELSAHLCPHGRCVNLIGKYQCACNPGYHSTPDRLFCV. Positions 1197–1237 constitute an EGF-like 19; calcium-binding domain; sequence DIDECSIMNGGCETFCTNSEGSYECSCQPGFALMPDQRSCT. A glycan (O-linked (Glc) serine) is linked at serine 1218. One can recognise an EGF-like 20; calcium-binding domain in the interval 1238–1279; the sequence is DIDECEDNPNICDGGQCTNIPGEYRCLCYDGFMASEDMKTCV. Residues 1280–1321 form the EGF-like 21; calcium-binding domain; the sequence is DVNECDLNPNICLSGTCENTKGSFICHCDMGYSGKKGKTGCT. The O-linked (Glc) serine glycan is linked to serine 1302. In terms of domain architecture, EGF-like 22; calcium-binding spans 1322–1362; sequence DINECEIGAHNCDRHAVCTNTAGSFKCSCSPGWIGDGIKCT. A glycan (O-linked (Glc) serine) is linked at serine 1345. One can recognise an EGF-like 23; calcium-binding domain in the interval 1363-1403; it reads DLDECSNGTHMCSQHADCKNTMGSYRCLCKEGYTGDGFTCT. Asparagine 1369 is a glycosylation site (N-linked (GlcNAc...) asparagine). An O-linked (Glc) serine glycan is attached at serine 1386. One can recognise an EGF-like 24; calcium-binding domain in the interval 1404–1445; that stretch reads DLDECSENLNLCGNGQCLNAPGGYRCECDMGFVPSADGKACE. The 41-residue stretch at 1446–1486 folds into the EGF-like 25; calcium-binding domain; it reads DIDECSLPNICVFGTCHNLPGLFRCECEIGYELDRSGGNCT. Asparagine 1484 is a glycosylation site (N-linked (GlcNAc...) asparagine). The region spanning 1487–1527 is the EGF-like 26; calcium-binding domain; sequence DVNECLDPTTCISGNCVNTPGSYTCDCPPDFELNPTRVGCV. O-linked (Glc) serine glycosylation is present at serine 1508. The segment at 1528-2731 is C-terminal domain; it reads DTRSGNCYLD…GYPKRGRKRR (1204 aa). Positions 1532-1589 constitute a TB 6 domain; sequence GNCYLDIRPRGDNGDTACSNEIGVGVSKASCCCSLGKAWGTPCELCPPVNTSEYKILC. Positions 1541 to 1543 match the Cell attachment site motif; that stretch reads RGD. N-linked (GlcNAc...) asparagine glycosylation is present at asparagine 1581. The 42-residue stretch at 1606-1647 folds into the EGF-like 27; calcium-binding domain; sequence DIDECQELPGLCQGGKCINTFGSFQCRCPTGYYLNEDTRVCD. Serine 1628 carries O-linked (Glc) serine glycosylation. Residues 1648-1688 form the EGF-like 28; calcium-binding domain; it reads DVNECETPGICGPGTCYNTVGNYTCICPPDYMQVNGGNNCM. The N-linked (GlcNAc...) asparagine glycan is linked to asparagine 1669. A TB 7 domain is found at 1693–1748; that stretch reads SLCYRNYYADNQTCDGELLFNMTKKMCCCSYNIGRAWNKPCEQCPIPSTDEFATLC. N-linked (GlcNAc...) asparagine glycans are attached at residues asparagine 1703 and asparagine 1713. One can recognise an EGF-like 29; calcium-binding domain in the interval 1766-1807; the sequence is DIDECREIPGVCENGVCINMVGSFRCECPVGFFYNDKLLVCE. Disulfide bonds link cysteine 1770/cysteine 1782, cysteine 1777/cysteine 1791, cysteine 1793/cysteine 1806, cysteine 1812/cysteine 1824, cysteine 1818/cysteine 1833, cysteine 1835/cysteine 1847, cysteine 1853/cysteine 1865, cysteine 1860/cysteine 1874, cysteine 1876/cysteine 1889, cysteine 1895/cysteine 1905, cysteine 1900/cysteine 1914, cysteine 1916/cysteine 1928, cysteine 1934/cysteine 1947, cysteine 1942/cysteine 1956, cysteine 1958/cysteine 1971, cysteine 1977/cysteine 1989, cysteine 1984/cysteine 1998, cysteine 2000/cysteine 2011, cysteine 2017/cysteine 2029, cysteine 2024/cysteine 2038, cysteine 2040/cysteine 2053, cysteine 2061/cysteine 2083, cysteine 2070/cysteine 2096, cysteine 2084/cysteine 2099, cysteine 2085/cysteine 2111, cysteine 2131/cysteine 2142, cysteine 2137/cysteine 2151, cysteine 2153/cysteine 2164, cysteine 2170/cysteine 2181, cysteine 2176/cysteine 2190, cysteine 2192/cysteine 2204, cysteine 2210/cysteine 2221, cysteine 2217/cysteine 2230, cysteine 2232/cysteine 2245, cysteine 2251/cysteine 2265, cysteine 2258/cysteine 2274, cysteine 2276/cysteine 2289, cysteine 2295/cysteine 2307, cysteine 2302/cysteine 2316, and cysteine 2318/cysteine 2331. One can recognise an EGF-like 30; calcium-binding domain in the interval 1808-1848; the sequence is DIDECQNGPVCQRNAECINTAGSYRCDCKPGYRFTSTGQCN. O-linked (Glc) serine glycosylation occurs at serine 1830. In terms of domain architecture, EGF-like 31; calcium-binding spans 1849–1890; that stretch reads DRNECQEIPNICSHGQCIDTVGSFYCLCHTGFKTNADQTMCL. Serine 1871 carries O-linked (Glc) serine glycosylation. Positions 1891 to 1929 constitute an EGF-like 32; calcium-binding domain; the sequence is DINECERDACGNGTCRNTIGSFNCRCNHGFILSHNNDCI. Asparagine 1902 carries an N-linked (GlcNAc...) asparagine glycan. Serine 1911 carries an O-linked (Glc) serine glycan. Positions 1930 to 1972 constitute an EGF-like 33; calcium-binding domain; that stretch reads DVDECATGNGNLCRNGQCINTVGSFQCQCNEGYEVAPDGRTCV. The O-linked (Glc) serine glycan is linked to serine 1953. One can recognise an EGF-like 34; calcium-binding domain in the interval 1973–2012; the sequence is DINECLLDPRKCAPGTCQNLDGSYRCICPPGYSLQNDKCE. Residues 2013–2054 enclose the EGF-like 35; calcium-binding domain; that stretch reads DIDECVEEPEICALGTCSNTEGSFKCLCPDGFSLSSTGRRCQ. Residue serine 2035 is glycosylated (O-linked (Glc) serine). Positions 2059–2111 constitute a TB 8 domain; sequence SYCYAKFEGGKCSSPKSRNHSKQECCCALKGEGWGDPCELCPTEPDEAFRQIC. An N-linked (GlcNAc...) asparagine glycan is attached at asparagine 2077. Residues 2127–2165 enclose the EGF-like 36; calcium-binding domain; sequence DMDECKEPDVCKHGQCINTDGSYRCECPFGYILQGNECV. Serine 2148 carries O-linked (Glc) serine glycosylation. Residues 2166-2205 enclose the EGF-like 37; calcium-binding domain; that stretch reads DTDECSVGNPCGNGTCKNVIGGFECTCEEGFEPGPMMTCE. Residue asparagine 2178 is glycosylated (N-linked (GlcNAc...) asparagine). Residues 2206–2246 enclose the EGF-like 38; calcium-binding domain; sequence DINECAQNPLLCAFRCVNTYGSYECKCPAGYVLREDRRMCK. O-linked (Glc) serine glycosylation is present at serine 2227. The EGF-like 39; calcium-binding domain maps to 2247–2290; the sequence is DEDECEEGKHDCAEKQMECKNLIGTYLCICGPGYQRRPDGEGCV. Residues 2291–2332 enclose the EGF-like 40; calcium-binding domain; that stretch reads DENECQTKPGICENGRCLNTRGSYTCECNDGFTASPNQDECL. O-linked (Glc) serine glycosylation occurs at serine 2313. Positions 2337-2390 constitute a TB 9 domain; that stretch reads GYCFTEVLQNMCQIGSSNRNPVTKSECCCDGGRGWGPHCEICPFQGTVAFKKLC. An EGF-like 41; calcium-binding domain is found at 2402-2443; the sequence is DIDECKVIHDVCRNGECVNDRGSYHCICKTGYTPDITGTACV. Intrachain disulfides connect cysteine 2406–cysteine 2418, cysteine 2413–cysteine 2427, cysteine 2429–cysteine 2442, cysteine 2448–cysteine 2459, cysteine 2455–cysteine 2468, cysteine 2470–cysteine 2483, cysteine 2489–cysteine 2500, cysteine 2496–cysteine 2509, cysteine 2511–cysteine 2522, cysteine 2528–cysteine 2541, cysteine 2535–cysteine 2550, cysteine 2552–cysteine 2565, cysteine 2571–cysteine 2581, cysteine 2577–cysteine 2590, cysteine 2592–cysteine 2605, cysteine 2611–cysteine 2622, cysteine 2617–cysteine 2631, cysteine 2633–cysteine 2646, cysteine 2652–cysteine 2663, cysteine 2659–cysteine 2672, and cysteine 2674–cysteine 2686. Positions 2444–2484 constitute an EGF-like 42; calcium-binding domain; sequence DLNECNQAPKPCNFICKNTEGSYQCSCPKGYILQEDGRSCK. An O-linked (Glc) serine glycan is attached at serine 2465. The EGF-like 43; calcium-binding domain occupies 2485-2523; that stretch reads DLDECATKQHNCQFLCVNTIGSFTCKCPPGFTQHHTACI. Residues 2524–2566 form the EGF-like 44; calcium-binding domain; it reads DNNECTSDINLCGSKGICQNTPGSFTCECQRGFSLDPSGASCE. O-linked (Glc) serine glycosylation occurs at serine 2547. Residues 2567 to 2606 form the EGF-like 45; calcium-binding domain; sequence DVDECEGNHRCQHGCQNIIGGYRCSCPQGYLQHYQWNQCV. One can recognise an EGF-like 46; calcium-binding domain in the interval 2607-2647; that stretch reads DENECLSAHICGGASCHNTLGSYKCMCPAGFQYEQFSGGCQ. O-linked (Glc) serine glycosylation occurs at serine 2628. The EGF-like 47; calcium-binding domain occupies 2648 to 2687; it reads DINECGSAQAPCSYGCSNTEGGYLCACPPGYFRIGQGHCV. A phosphoserine mark is found at serine 2702 and serine 2709. Asparagine 2734, asparagine 2750, and asparagine 2767 each carry an N-linked (GlcNAc...) asparagine glycan.

Belongs to the fibrillin family. In terms of assembly, interacts with COL16A1. Interacts with integrin alpha-V/beta-3. Interacts with ADAMTS10; this interaction promotes microfibril assembly. Interacts with THSD4; this interaction promotes fibril formation. Interacts (via N-terminal domain) with FBLN2 and FBLN5. Interacts with ELN. Forms a ternary complex with ELN and FBLN2 or FBLN5 and a significant interaction with ELN seen only in the presence of FBLN2 or FBLN5. Interacts (via N-terminal domain) with LTBP2 (via C-terminal domain) in a Ca(+2)-dependent manner. Interacts (via N-terminal domain) with LTBP1 (via C-terminal domain). Interacts with integrins ITGA5:ITGB1, ITGAV:ITGB3 and ITGAV:ITGB6. Interacts (via N-terminal domain) with BMP2, BMP4, BMP7, BMP10 and GDF5. Interacts (via N-terminal domain) with MFAP2 and MFAP5. Interacts with ADAMTSL5. Interacts with MFAP4. Interacts (via N-terminal domain) with TNFSF11 in a Ca(+2)-dependent manner. Interacts (via N-terminal domain) with EFEMP2; this interaction inhibits EFEMP2 binding to LOX and ELN. Cleavage of N- and C-terminus by furin is required for incorporation into the extracellular matrix and assembly into microfibrils. The C-terminus, which corresponds to the Asprosin chain, was initially thought to constitute a propeptide. Fibrillin-1 and Asprosin chains are still linked together during the secretion from cells, but are subsequently separated by furin, an essential step for incorporation of Fibrillin-1 into the nascent microfibrils. Post-translationally, forms intermolecular disulfide bonds either with other fibrillin-1 molecules or with other components of the microfibrils. In terms of processing, O-glycosylated on serine residues by POGLUT2 and POGLUT3 which is necessary for efficient protein secretion.

Its subcellular location is the secreted. The protein resides in the extracellular space. The protein localises to the extracellular matrix. Functionally, structural component of the 10-12 nm diameter microfibrils of the extracellular matrix, which conveys both structural and regulatory properties to load-bearing connective tissues. Fibrillin-1-containing microfibrils provide long-term force bearing structural support. In tissues such as the lung, blood vessels and skin, microfibrils form the periphery of the elastic fiber, acting as a scaffold for the deposition of elastin. In addition, microfibrils can occur as elastin-independent networks in tissues such as the ciliary zonule, tendon, cornea and glomerulus where they provide tensile strength and have anchoring roles. Fibrillin-1 also plays a key role in tissue homeostasis through specific interactions with growth factors, such as the bone morphogenetic proteins (BMPs), growth and differentiation factors (GDFs) and latent transforming growth factor-beta-binding proteins (LTBPs), cell-surface integrins and other extracellular matrix protein and proteoglycan components. Regulates osteoblast maturation by controlling TGF-beta bioavailability and calibrating TGF-beta and BMP levels, respectively. Negatively regulates osteoclastogenesis by binding and sequestering an osteoclast differentiation and activation factor TNFSF11. This leads to disruption of TNFSF11-induced Ca(2+) signaling and impairment of TNFSF11-mediated nuclear translocation and activation of transcription factor NFATC1 which regulates genes important for osteoclast differentiation and function. Mediates cell adhesion via its binding to cell surface receptors integrins ITGAV:ITGB3 and ITGA5:ITGB1. Binds heparin and this interaction plays an important role in the assembly of microfibrils. Hormone that targets the liver to increase plasma glucose levels. Secreted by white adipose tissue and circulates in the plasma. Acts in response to fasting and promotes blood glucose elevation by binding to the surface of hepatocytes. Promotes hepatocyte glucose release by activating the protein kinase A activity in the liver, resulting in rapid glucose release into the circulation. The chain is Fibrillin-1 from Bos taurus (Bovine).